A 100-amino-acid chain; its full sequence is Large ribosomal subunit protein uL23 (100 aa).

This sequence belongs to the universal ribosomal protein uL23 family. As to quaternary structure, part of the 50S ribosomal subunit. Contacts protein L29, and trigger factor when it is bound to the ribosome.

In terms of biological role, one of the early assembly proteins it binds 23S rRNA. One of the proteins that surrounds the polypeptide exit tunnel on the outside of the ribosome. Forms the main docking site for trigger factor binding to the ribosome. This Baumannia cicadellinicola subsp. Homalodisca coagulata protein is Large ribosomal subunit protein uL23.